Here is a 303-residue protein sequence, read N- to C-terminus: Probable 5-dehydro-4-deoxyglucarate dehydratase (303 aa).

It belongs to the DapA family.

It carries out the reaction 5-dehydro-4-deoxy-D-glucarate + H(+) = 2,5-dioxopentanoate + CO2 + H2O. The protein operates within carbohydrate acid metabolism; D-glucarate degradation; 2,5-dioxopentanoate from D-glucarate: step 2/2. The protein is Probable 5-dehydro-4-deoxyglucarate dehydratase of Pseudomonas putida (strain GB-1).